A 502-amino-acid polypeptide reads, in one-letter code: Dipeptide and tripeptide permease A (502 aa).

Topologically, residues 1–35 are cytoplasmic; that stretch reads MSTANNKPTDESVSLNAFKQPKAFYLIFSIELWER. A helical transmembrane segment spans residues 36–56; sequence FGFYGLQGIMAVYLVKQLGMS. Over 57–60 the chain is Periplasmic; the sequence is EADS. Residues 61 to 81 traverse the membrane as a helical segment; sequence ITLFSSFSALVYGLVAVGGWL. Residues 82–90 lie on the Cytoplasmic side of the membrane; that stretch reads GDKVLGTKR. Residues 91 to 111 traverse the membrane as a helical segment; the sequence is VIMLGAVVLAIGYGLVAWSGH. A topological domain (periplasmic) is located at residue Asp-112. Residues 113-133 form a helical membrane-spanning segment; that stretch reads AAVVYMGMATIAVGNGLFKAN. Residues 134-154 lie on the Cytoplasmic side of the membrane; sequence PSSLLSTCYNKDDPRLDGAFT. Residues 155–175 form a helical membrane-spanning segment; the sequence is MYYMSINIGSFFSMLATPWLA. Residues 176 to 179 are Periplasmic-facing; that stretch reads AKFG. A helical membrane pass occupies residues 180–200; it reads WSVAFALSFVGMLITVVNFLF. Residues 201-218 are Cytoplasmic-facing; sequence CRSWVKNYGSKPDFEPVH. A helical transmembrane segment spans residues 219–239; sequence IGKLLATIVGVVILATIATWL. Residues 240–247 lie on the Periplasmic side of the membrane; that stretch reads LHNQGVAR. Residues 248-268 form a helical membrane-spanning segment; the sequence is AVLGVVALGIICIFAKEAFAM. Topologically, residues 269–275 are cytoplasmic; sequence QGAARRK. Residues 276–296 traverse the membrane as a helical segment; sequence MIVAFILMLQAVVFFVLYSQM. Residues 297–321 lie on the Periplasmic side of the membrane; sequence PTSLNFFAIRNVEHSILSIAFEPEQ. Residues 322–342 form a helical membrane-spanning segment; the sequence is FQALNPFWIMIGSPILAAIYN. The Cytoplasmic portion of the chain corresponds to 343–353; the sequence is KMGDRLPMPHK. Residues 354–374 form a helical membrane-spanning segment; it reads FAIGMVLCSGAFLVLPLGTKF. Residues 375–384 lie on the Periplasmic side of the membrane; it reads ATDAGIVSVN. The chain crosses the membrane as a helical span at residues 385-405; it reads WLILSYALQSIGELMISGLGL. The Cytoplasmic segment spans residues 406–415; sequence AMVAQLVPQR. Residues 416-436 form a helical membrane-spanning segment; the sequence is LMGFIMGSWFLTTAGAALIAG. Residues 437 to 460 are Periplasmic-facing; it reads KIANLMAVPENVTDPLVSLEVYGR. A helical membrane pass occupies residues 461 to 481; it reads VFMQIGIATAVIAVLMLLTAP. Topologically, residues 482-502 are cytoplasmic; it reads KLNRMTLEDDKAAKATDTATA.

The protein belongs to the major facilitator superfamily. Proton-dependent oligopeptide transporter (POT/PTR) (TC 2.A.17) family. DtpA subfamily.

It is found in the cell inner membrane. In terms of biological role, proton-dependent permease that transports di- and tripeptides. The polypeptide is Dipeptide and tripeptide permease A (Enterobacter sp. (strain 638)).